The primary structure comprises 163 residues: Globin CTT-Z (163 aa).

The N-terminal stretch at 1–16 is a signal peptide; the sequence is MKFFAVLALCIVGAIA. The 145-residue stretch at 18-162 folds into the Globin domain; the sequence is PLTSDEAALV…VYTAVFQIVT (145 aa). Heme b is bound by residues His-76 and His-111.

It belongs to the globin family.

The protein is Globin CTT-Z (CTT-Z) of Chironomus thummi thummi (Midge).